Reading from the N-terminus, the 229-residue chain is Leucyl/phenylalanyl-tRNA--protein transferase (229 aa).

It belongs to the L/F-transferase family.

It is found in the cytoplasm. It carries out the reaction N-terminal L-lysyl-[protein] + L-leucyl-tRNA(Leu) = N-terminal L-leucyl-L-lysyl-[protein] + tRNA(Leu) + H(+). The enzyme catalyses N-terminal L-arginyl-[protein] + L-leucyl-tRNA(Leu) = N-terminal L-leucyl-L-arginyl-[protein] + tRNA(Leu) + H(+). It catalyses the reaction L-phenylalanyl-tRNA(Phe) + an N-terminal L-alpha-aminoacyl-[protein] = an N-terminal L-phenylalanyl-L-alpha-aminoacyl-[protein] + tRNA(Phe). Functionally, functions in the N-end rule pathway of protein degradation where it conjugates Leu, Phe and, less efficiently, Met from aminoacyl-tRNAs to the N-termini of proteins containing an N-terminal arginine or lysine. This Desulforapulum autotrophicum (strain ATCC 43914 / DSM 3382 / VKM B-1955 / HRM2) (Desulfobacterium autotrophicum) protein is Leucyl/phenylalanyl-tRNA--protein transferase.